The sequence spans 472 residues: MALFIVTVSELTDYIAEKFEKDDWLNQVAVEGELSNCKFSQGHLYFTLKDERAELKGVMYKGRASALPFIPQDGQKVIVFGQVAVYKKRGIYQIYAEMIEPLGIGALYLKFEQTKEKLRDKGYFAEERKKKLPRYPEKIGIVTSKNGAAIRDILTTIKKRWPKATLYLVPVAVQGDEAPGQIVKALNLLNRYKLCEVIILARGGGSFEELAAFNEETVADAIYASNIPVVTGIGHETDTSIADMVADRRAPTPTGAAVEATPNLVEIWNNLREQRQKMVKALANYFQREQKNLEFQERRILRAYEKLITDKSREVTEGLERLLRSFKTTFQQEKNRLSLLKEKLILLSPYLRHKQQKEKLEELKERLFLRCAELLKRNQAVLIQQSLRLRTSVKNLVLQKNLVLSSYEERLKLLNPLKILNRGYAVVFDFEGRVVTSVNNLPERFKIKFSDGEALAKALGKNIIEGDKNDDL.

Belongs to the XseA family. As to quaternary structure, heterooligomer composed of large and small subunits.

Its subcellular location is the cytoplasm. It catalyses the reaction Exonucleolytic cleavage in either 5'- to 3'- or 3'- to 5'-direction to yield nucleoside 5'-phosphates.. Bidirectionally degrades single-stranded DNA into large acid-insoluble oligonucleotides, which are then degraded further into small acid-soluble oligonucleotides. This is Exodeoxyribonuclease 7 large subunit from Carboxydothermus hydrogenoformans (strain ATCC BAA-161 / DSM 6008 / Z-2901).